Reading from the N-terminus, the 129-residue chain is D-ribose pyranase (129 aa).

Histidine 20 acts as the Proton donor in catalysis. Residues aspartate 28, histidine 96, and 118 to 120 (YAN) contribute to the substrate site.

Belongs to the RbsD / FucU family. RbsD subfamily. As to quaternary structure, homodecamer.

The protein localises to the cytoplasm. The enzyme catalyses beta-D-ribopyranose = beta-D-ribofuranose. It functions in the pathway carbohydrate metabolism; D-ribose degradation; D-ribose 5-phosphate from beta-D-ribopyranose: step 1/2. In terms of biological role, catalyzes the interconversion of beta-pyran and beta-furan forms of D-ribose. The sequence is that of D-ribose pyranase from Exiguobacterium sibiricum (strain DSM 17290 / CCUG 55495 / CIP 109462 / JCM 13490 / 255-15).